Reading from the N-terminus, the 251-residue chain is Hydroxyacylglutathione hydrolase (251 aa).

Zn(2+) is bound by residues H53, H55, D57, H58, H110, D127, and H165.

This sequence belongs to the metallo-beta-lactamase superfamily. Glyoxalase II family. In terms of assembly, monomer. It depends on Zn(2+) as a cofactor.

It catalyses the reaction an S-(2-hydroxyacyl)glutathione + H2O = a 2-hydroxy carboxylate + glutathione + H(+). It functions in the pathway secondary metabolite metabolism; methylglyoxal degradation; (R)-lactate from methylglyoxal: step 2/2. Functionally, thiolesterase that catalyzes the hydrolysis of S-D-lactoyl-glutathione to form glutathione and D-lactic acid. The sequence is that of Hydroxyacylglutathione hydrolase from Escherichia coli O45:K1 (strain S88 / ExPEC).